The following is a 636-amino-acid chain: Iron transport multicopper oxidase FET3 (636 aa).

A signal peptide spans 1–21; it reads MTNALLSIAVLLFSMLSLAQA. Residues 22 to 559 lie on the Extracellular side of the membrane; the sequence is ETHTFNWTTG…AFIPTGFTKK (538 aa). N-linked (GlcNAc...) asparagine glycosylation is found at Asn-27, Asn-74, and Asn-77. Plastocyanin-like domains lie at 32-146 and 157-301; these read WDYR…IKDD and SLSL…VYNK. The Cu cation site is built by His-81 and His-83. N-linked (GlcNAc...) asparagine glycosylation is found at Asn-88 and Asn-113. The Cu cation site is built by His-126 and His-128. N-linked (GlcNAc...) asparagine glycosylation is found at Asn-194, Asn-198, Asn-244, Asn-265, Asn-292, Asn-300, Asn-359, and Asn-381. The 141-residue stretch at 362-502 folds into the Plastocyanin-like 3 domain; it reads YTAPKVPTLM…GLGLVLVEDP (141 aa). Residues His-413, His-416, His-418, His-483, Cys-484, His-485, and His-489 each coordinate Cu cation. Residues 560–584 traverse the membrane as a helical segment; sequence GIIAMTFSCFAGILGIITIAIYGMM. Residues 585–636 lie on the Cytoplasmic side of the membrane; that stretch reads DMEDATEKVIRDLHVDPEVLLNEVDENEERQVNEDRHSTEKHQFLTKAKRFF.

The protein belongs to the multicopper oxidase family. The cofactor is Cu cation.

It localises to the cell membrane. The catalysed reaction is 4 Fe(2+) + O2 + 4 H(+) = 4 Fe(3+) + 2 H2O. The enzyme catalyses 4 Cu(+) + O2 + 4 H(+) = 4 Cu(2+) + 2 H2O. Iron transport multicopper ferroxidase required for Fe(2+) ion high affinity uptake. Required to oxidize Fe(2+) to Fe(3+), which is then transported into the cell via the ferric iron permease FTR1. Essential component of copper-dependent iron transport. Also has cuprous oxidase activity. The chain is Iron transport multicopper oxidase FET3 (FET3) from Saccharomyces cerevisiae (strain ATCC 204508 / S288c) (Baker's yeast).